The chain runs to 356 residues: Histidinol-phosphate aminotransferase (356 aa).

K214 carries the N6-(pyridoxal phosphate)lysine modification.

It belongs to the class-II pyridoxal-phosphate-dependent aminotransferase family. Histidinol-phosphate aminotransferase subfamily. Homodimer. It depends on pyridoxal 5'-phosphate as a cofactor.

The catalysed reaction is L-histidinol phosphate + 2-oxoglutarate = 3-(imidazol-4-yl)-2-oxopropyl phosphate + L-glutamate. It participates in amino-acid biosynthesis; L-histidine biosynthesis; L-histidine from 5-phospho-alpha-D-ribose 1-diphosphate: step 7/9. The sequence is that of Histidinol-phosphate aminotransferase from Shigella dysenteriae serotype 1 (strain Sd197).